Consider the following 406-residue polypeptide: Argininosuccinate synthase (406 aa).

Residues 11–19 and Ala-38 contribute to the ATP site; that span reads AYSGGLDTS. L-citrulline is bound by residues Tyr-91 and Ser-96. ATP is bound at residue Gly-121. L-aspartate contacts are provided by Thr-123, Asn-127, and Asp-128. Asn-127 serves as a coordination point for L-citrulline. L-citrulline is bound by residues Arg-131, Ser-181, Ser-190, Glu-266, and Tyr-278.

Belongs to the argininosuccinate synthase family. Type 1 subfamily. In terms of assembly, homotetramer.

It is found in the cytoplasm. It carries out the reaction L-citrulline + L-aspartate + ATP = 2-(N(omega)-L-arginino)succinate + AMP + diphosphate + H(+). It functions in the pathway amino-acid biosynthesis; L-arginine biosynthesis; L-arginine from L-ornithine and carbamoyl phosphate: step 2/3. The chain is Argininosuccinate synthase from Campylobacter jejuni subsp. jejuni serotype O:2 (strain ATCC 700819 / NCTC 11168).